We begin with the raw amino-acid sequence, 470 residues long: UDP-glycosyltransferase 75C1 (470 aa).

H16 serves as the catalytic Proton acceptor. Position 16 (H16) interacts with an anthocyanidin. 8 residues coordinate UDP-alpha-D-glucose: Q347, H362, W365, N366, S367, E370, D386, and Q387.

This sequence belongs to the UDP-glycosyltransferase family. Expressed in flowers and fruits, especially in pulp, and, at lower levels, in seeds.

The protein localises to the cytoplasm. The protein resides in the nucleus. It catalyses the reaction 2-cis-(+)-abscisate + UDP-alpha-D-glucose = beta-D-glucopyranosyl cis-(+)-abscisate + UDP. It carries out the reaction (indol-3-yl)acetate + UDP-alpha-D-glucose = 1-O-(indol-3-ylacetyl)-beta-D-glucose + UDP. Its function is as follows. Glucosyltransferase acting on both abscisic acid (ABA) and auxin (IAA). Required for ABA-mediated fruit ripening, seed germination, and negative responses to drought. The chain is UDP-glycosyltransferase 75C1 from Solanum lycopersicum (Tomato).